Consider the following 415-residue polypeptide: Serine hydroxymethyltransferase (415 aa).

Residues Leu-122 and 126-128 (GHL) each bind (6S)-5,6,7,8-tetrahydrofolate. An N6-(pyridoxal phosphate)lysine modification is found at Lys-230.

The protein belongs to the SHMT family. As to quaternary structure, homodimer. The cofactor is pyridoxal 5'-phosphate.

The protein resides in the cytoplasm. The enzyme catalyses (6R)-5,10-methylene-5,6,7,8-tetrahydrofolate + glycine + H2O = (6S)-5,6,7,8-tetrahydrofolate + L-serine. It participates in one-carbon metabolism; tetrahydrofolate interconversion. The protein operates within amino-acid biosynthesis; glycine biosynthesis; glycine from L-serine: step 1/1. Catalyzes the reversible interconversion of serine and glycine with tetrahydrofolate (THF) serving as the one-carbon carrier. This reaction serves as the major source of one-carbon groups required for the biosynthesis of purines, thymidylate, methionine, and other important biomolecules. Also exhibits THF-independent aldolase activity toward beta-hydroxyamino acids, producing glycine and aldehydes, via a retro-aldol mechanism. The chain is Serine hydroxymethyltransferase from Cupriavidus necator (strain ATCC 17699 / DSM 428 / KCTC 22496 / NCIMB 10442 / H16 / Stanier 337) (Ralstonia eutropha).